The following is a 448-amino-acid chain: Fibulin-5 (448 aa).

Residues M1–A23 form the signal peptide. One can recognise an EGF-like 1; calcium-binding domain in the interval D42 to N82. 17 cysteine pairs are disulfide-bonded: C46–C59, C53–C68, C131–C144, C138–C153, C155–C166, C172–C181, C177–C190, C192–C205, C211–C221, C217–C230, C232–C245, C251–C262, C258–C271, C273–C286, C292–C305, C299–C314, and C320–C332. A Cell attachment site motif is present at residues R54–D56. In terms of domain architecture, EGF-like 2; calcium-binding spans D127–L167. Residues D168–Q206 enclose the EGF-like 3; calcium-binding domain. The region spanning D207 to S246 is the EGF-like 4; calcium-binding domain. Residues C245–F448 are interaction with LOXL1. The region spanning D247 to Q287 is the EGF-like 5; calcium-binding domain. N-linked (GlcNAc...) asparagine glycans are attached at residues N283 and N296. The EGF-like 6; calcium-binding domain maps to D288–M333.

This sequence belongs to the fibulin family. Homodimer. Monomer, homodimerizes in presence of Ca(2+). Interacts with ELN. Interacts (via N-terminus) with the integrins ITGAV/ITGB3, ITGAV/ITGB5 and ITGA9/ITGB1. Interacts with FBN1 (via N-terminal domain). Forms a ternary complex with ELN and FBN1. Interacts with EFEMP2 with moderate affinity. Interacts with LOXL1. Post-translationally, N-glycosylated.

The protein resides in the secreted. Its subcellular location is the extracellular space. It localises to the extracellular matrix. Functionally, essential for elastic fiber formation, is involved in the assembly of continuous elastin (ELN) polymer and promotes the interaction of microfibrils and ELN. Stabilizes and organizes elastic fibers in the skin, lung and vasculature. Promotes adhesion of endothelial cells through interaction of integrins and the RGD motif. Vascular ligand for integrin receptors which may play a role in vascular development and remodeling. May act as an adapter that mediates the interaction between FBN1 and ELN. In Mus musculus (Mouse), this protein is Fibulin-5 (Fbln5).